A 129-amino-acid chain; its full sequence is MVDVKCLSDYELHKHLMKLGFTPGPILPSTRKTYEKKLVQLLASPPWKPPVMKRPTRPHGSEDSDDSEGMLQDQVQGLSGDVSLKKTTLDATRDPRAAPHTRTPGTTFHARTLRTAFCGRAPRTTSHGA.

In terms of domain architecture, LEM spans 1 to 45 (MVDVKCLSDYELHKHLMKLGFTPGPILPSTRKTYEKKLVQLLASP). Residues 45 to 129 (PPWKPPVMKR…RAPRTTSHGA (85 aa)) are disordered. Residues 83–97 (SLKKTTLDATRDPRA) are compositionally biased toward basic and acidic residues.

This is LEM domain-containing protein 1 (Lemd1) from Mus musculus (Mouse).